A 103-amino-acid polypeptide reads, in one-letter code: Large ribosomal subunit protein bL21 (103 aa).

This sequence belongs to the bacterial ribosomal protein bL21 family. In terms of assembly, part of the 50S ribosomal subunit. Contacts protein L20.

Functionally, this protein binds to 23S rRNA in the presence of protein L20. The chain is Large ribosomal subunit protein bL21 from Bordetella petrii (strain ATCC BAA-461 / DSM 12804 / CCUG 43448).